Reading from the N-terminus, the 119-residue chain is UPF0102 protein HI_1656 (119 aa).

This sequence belongs to the UPF0102 family.

This chain is UPF0102 protein HI_1656, found in Haemophilus influenzae (strain ATCC 51907 / DSM 11121 / KW20 / Rd).